Here is a 98-residue protein sequence, read N- to C-terminus: Protein Vpr (98 aa).

Residues 1–42 form a homooligomerization region; sequence MEQLPEDQGPQREPYNEWTLEILEELKREAVRHFPRDWLHQL. Phosphoserine; by host is present on residues Ser79 and Ser98.

Belongs to the HIV-1 VPR protein family. As to quaternary structure, homooligomer, may form homodimer. Interacts with p6-gag region of the Pr55 Gag precursor protein through a (Leu-X-X)4 motif near the C-terminus of the P6gag protein. Interacts with host UNG. May interact with host RAD23A/HHR23A. Interacts with host VPRBP/DCAF1, leading to hijack the CUL4A-RBX1-DDB1-DCAF1/VPRBP complex, mediating ubiquitination of host proteins such as TERT and ZGPAT and arrest of the cell cycle in G2 phase. Post-translationally, phosphorylated on several residues by host. These phosphorylations regulate VPR activity for the nuclear import of the HIV-1 pre-integration complex.

It localises to the virion. The protein resides in the host nucleus. It is found in the host extracellular space. Its function is as follows. During virus replication, may deplete host UNG protein, and incude G2-M cell cycle arrest. Acts by targeting specific host proteins for degradation by the 26S proteasome, through association with the cellular CUL4A-DDB1 E3 ligase complex by direct interaction with host VPRPB/DCAF-1. Cell cycle arrest reportedly occurs within hours of infection and is not blocked by antiviral agents, suggesting that it is initiated by the VPR carried into the virion. Additionally, VPR induces apoptosis in a cell cycle dependent manner suggesting that these two effects are mechanistically linked. Detected in the serum and cerebrospinal fluid of AIDS patient, VPR may also induce cell death to bystander cells. In terms of biological role, during virus entry, plays a role in the transport of the viral pre-integration (PIC) complex to the host nucleus. This function is crucial for viral infection of non-dividing macrophages. May act directly at the nuclear pore complex, by binding nucleoporins phenylalanine-glycine (FG)-repeat regions. The protein is Protein Vpr of Pan troglodytes (Chimpanzee).